Reading from the N-terminus, the 476-residue chain is Thyroid receptor-interacting protein 6 (476 aa).

Over residues 1 to 12 (MSGPTWLPPKQP) the composition is skewed to pro residues. Disordered regions lie at residues 1 to 93 (MSGP…PGSL) and 108 to 253 (NGGR…QPPE). An Asymmetric dimethylarginine; alternate modification is found at R25. R25 carries the omega-N-methylarginine; alternate modification. Position 55 is a phosphotyrosine; by SRC (Y55). S92 is subject to Phosphoserine. R111 is modified (omega-N-methylarginine). At S142 the chain carries Phosphoserine. Residues 152 to 167 (PTPASYTTASTPAGPA) are compositionally biased toward low complexity. Residues R179 and R186 each carry the omega-N-methylarginine modification. S189 is subject to Phosphoserine. 3 positions are modified to omega-N-methylarginine: R205, R236, and R238. S249 is modified (phosphoserine). 3 LIM zinc-binding domains span residues 279–316 (CGGC…QLRG), 339–398 (CATC…FAPR), and 399–467 (CSVC…RIQE). The segment at 469 to 476 (SATVTTDC) is interaction with MAGI1 and PTPN13.

It belongs to the zyxin/ajuba family. Specifically interacts with the ligand binding domain of the thyroid receptor (TR) in the presence of thyroid hormone. Interacts (via the third LIM domain and C-terminus) with PTPN13 (via the second PDZ domain). Interacts (via the second LIM domain or via the third LIM domain plus C-terminus) with PDLIM4 (via PDZ domain). Found in a complex with PTPN13 and PDLIM4. Interacts with SVIL isoform 2. Interacts with LPAR2 but not other LPA receptors. Interacts with PRKAA2. Interacts with MAGI1. Interacts with SCRIB. In case of infection, interacts with S.typhimurium protein sseI. Phosphorylation at Tyr-55 by SRC is required for enhancement of lysophosphatidic acid-induced cell migration. Tyr-55 is dephosphorylated by PTPN13. In terms of tissue distribution, abundantly expressed in kidney, liver and lung. Lower levels in heart, placenta and pancreas. Expressed in colonic epithelial cells. Up-regulated in colonic tumors.

Its subcellular location is the cytoplasm. The protein resides in the cytoskeleton. It localises to the cell junction. The protein localises to the focal adhesion. It is found in the nucleus. Relays signals from the cell surface to the nucleus to weaken adherens junction and promote actin cytoskeleton reorganization and cell invasiveness. Involved in lysophosphatidic acid-induced cell adhesion and migration. Acts as a transcriptional coactivator for NF-kappa-B and JUN, and mediates the transrepression of these transcription factors induced by glucocorticoid receptor. This chain is Thyroid receptor-interacting protein 6 (TRIP6), found in Homo sapiens (Human).